A 722-amino-acid chain; its full sequence is Protein HAPLESS 2-A (722 aa).

Positions 1–24 (MPRRRGTPLPTILLLLAFVGGACG) are cleaved as a signal peptide. Topologically, residues 25 to 552 (TEILSKSRLE…LFDFGCHIQY (528 aa)) are extracellular. 7 cysteine pairs are disulfide-bonded: Cys-36–Cys-48, Cys-129–Cys-159, Cys-141–Cys-188, Cys-160–Cys-315, Cys-162–Cys-171, Cys-298–Cys-322, and Cys-435–Cys-473. The helical transmembrane segment at 553 to 573 (VCIGWILLLLLIPAAVVFLWL) threads the bilayer. The Cytoplasmic segment spans residues 574–722 (LHQEGLFDPL…HRDGHYSPSV (149 aa)). The span at 598-641 (RRRHQKGRHHRHHHDHRHRHGHSHGDHHHHYHGGHHQRRRHHHP) shows a compositional bias: basic residues. Disordered regions lie at residues 598 to 665 (RRRH…RNHH) and 680 to 722 (RLDR…SPSV). Residues 646–662 (VEGHHHDRQQHSHEAGR) show a composition bias toward basic and acidic residues. The segment covering 701–711 (RRSRHERHGGH) has biased composition (basic residues). Residues 712–722 (GHRDGHYSPSV) show a composition bias toward basic and acidic residues.

The protein belongs to the HAP2/GCS1 family.

It is found in the endoplasmic reticulum membrane. Its subcellular location is the cell membrane. In terms of biological role, required for male fertility. Plays a role in pollen tube guidance and successful gamete attachment. Essential for the fusion of gametes during double fertilization, where one male gamete fuses with the egg to produce a zygote, and another male gamete fuses with the central cell to produce the endosperm. Mediates the fusion of cell membranes. Not required for pollen tube outgrowth. This is Protein HAPLESS 2-A (HAP2A) from Oryza sativa subsp. japonica (Rice).